A 232-amino-acid chain; its full sequence is 2,3-bisphosphoglycerate-dependent phosphoglycerate mutase (232 aa).

Substrate-binding positions include 10–17 (RHGESQWN), 23–24 (TG), Arg62, 89–92 (ERHY), Lys100, 116–117 (RR), and 185–186 (GN). The active-site Tele-phosphohistidine intermediate is His11. Glu89 (proton donor/acceptor) is an active-site residue.

The protein belongs to the phosphoglycerate mutase family. BPG-dependent PGAM subfamily. As to quaternary structure, homodimer.

It catalyses the reaction (2R)-2-phosphoglycerate = (2R)-3-phosphoglycerate. Its pathway is carbohydrate degradation; glycolysis; pyruvate from D-glyceraldehyde 3-phosphate: step 3/5. Its function is as follows. Catalyzes the interconversion of 2-phosphoglycerate and 3-phosphoglycerate. The chain is 2,3-bisphosphoglycerate-dependent phosphoglycerate mutase from Blochmanniella floridana.